The sequence spans 813 residues: LPS-assembly protein LptD (813 aa).

Positions 1 to 22 (MRRALRLLPLPLSIAICLPAMA) are cleaved as a signal peptide.

Belongs to the LptD family. In terms of assembly, component of the lipopolysaccharide transport and assembly complex. Interacts with LptE and LptA.

Its subcellular location is the cell outer membrane. Together with LptE, is involved in the assembly of lipopolysaccharide (LPS) at the surface of the outer membrane. This chain is LPS-assembly protein LptD, found in Xanthomonas oryzae pv. oryzae (strain MAFF 311018).